Here is a 249-residue protein sequence, read N- to C-terminus: Probable transcriptional regulatory protein Sare_1779 (249 aa).

Belongs to the TACO1 family.

The protein resides in the cytoplasm. This chain is Probable transcriptional regulatory protein Sare_1779, found in Salinispora arenicola (strain CNS-205).